Consider the following 151-residue polypeptide: Large ribosomal subunit protein bL9 (151 aa).

The protein belongs to the bacterial ribosomal protein bL9 family.

In terms of biological role, binds to the 23S rRNA. This is Large ribosomal subunit protein bL9 from Francisella tularensis subsp. tularensis (strain FSC 198).